We begin with the raw amino-acid sequence, 448 residues long: Ribosomal protein uS12 methylthiotransferase RimO (448 aa).

Positions 16 to 126 constitute an MTTase N-terminal domain; it reads PKISFVSLGC…VVAAVHEAVP (111 aa). Positions 25, 61, 90, 157, 161, and 164 each coordinate [4Fe-4S] cluster. Residues 143-380 form the Radical SAM core domain; sequence LTPRHYAYLK…METQNGIALR (238 aa). One can recognise a TRAM domain in the interval 383-448; the sequence is RAKVGKRLPV…EAYDLYGSVA (66 aa).

Belongs to the methylthiotransferase family. RimO subfamily. It depends on [4Fe-4S] cluster as a cofactor.

Its subcellular location is the cytoplasm. The enzyme catalyses L-aspartate(89)-[ribosomal protein uS12]-hydrogen + (sulfur carrier)-SH + AH2 + 2 S-adenosyl-L-methionine = 3-methylsulfanyl-L-aspartate(89)-[ribosomal protein uS12]-hydrogen + (sulfur carrier)-H + 5'-deoxyadenosine + L-methionine + A + S-adenosyl-L-homocysteine + 2 H(+). In terms of biological role, catalyzes the methylthiolation of an aspartic acid residue of ribosomal protein uS12. The chain is Ribosomal protein uS12 methylthiotransferase RimO from Methylobacterium radiotolerans (strain ATCC 27329 / DSM 1819 / JCM 2831 / NBRC 15690 / NCIMB 10815 / 0-1).